We begin with the raw amino-acid sequence, 180 residues long: Large ribosomal subunit protein uL6 (180 aa).

It belongs to the universal ribosomal protein uL6 family. In terms of assembly, part of the 50S ribosomal subunit.

This protein binds to the 23S rRNA, and is important in its secondary structure. It is located near the subunit interface in the base of the L7/L12 stalk, and near the tRNA binding site of the peptidyltransferase center. The chain is Large ribosomal subunit protein uL6 from Borrelia garinii subsp. bavariensis (strain ATCC BAA-2496 / DSM 23469 / PBi) (Borreliella bavariensis).